The primary structure comprises 65 residues: Large ribosomal subunit protein bL35 (65 aa).

Residues 1 to 28 form a disordered region; it reads MPKMKTHRGAAKRFKKTGTGKIKRGQSK.

The protein belongs to the bacterial ribosomal protein bL35 family.

The polypeptide is Large ribosomal subunit protein bL35 (Acidobacterium capsulatum (strain ATCC 51196 / DSM 11244 / BCRC 80197 / JCM 7670 / NBRC 15755 / NCIMB 13165 / 161)).